The sequence spans 495 residues: Glycerol kinase (495 aa).

ADP is bound at residue threonine 11. Residues threonine 11, threonine 12, and serine 13 each contribute to the ATP site. Threonine 11 lines the sn-glycerol 3-phosphate pocket. Arginine 15 contributes to the ADP binding site. Arginine 81, glutamate 82, tyrosine 133, and aspartate 242 together coordinate sn-glycerol 3-phosphate. Glycerol contacts are provided by arginine 81, glutamate 82, tyrosine 133, aspartate 242, and glutamine 243. ADP-binding residues include threonine 264 and glycine 307. Residues threonine 264, glycine 307, glutamine 311, and glycine 408 each contribute to the ATP site. Glycine 408 lines the ADP pocket.

This sequence belongs to the FGGY kinase family.

The enzyme catalyses glycerol + ATP = sn-glycerol 3-phosphate + ADP + H(+). The protein operates within polyol metabolism; glycerol degradation via glycerol kinase pathway; sn-glycerol 3-phosphate from glycerol: step 1/1. Its activity is regulated as follows. Inhibited by fructose 1,6-bisphosphate (FBP). Its function is as follows. Key enzyme in the regulation of glycerol uptake and metabolism. Catalyzes the phosphorylation of glycerol to yield sn-glycerol 3-phosphate. The sequence is that of Glycerol kinase from Geobacter sp. (strain M21).